Consider the following 292-residue polypeptide: Nitrogenase iron protein 2 (292 aa).

12 to 19 contributes to the ATP binding site; it reads GKGGIGKS. Residue Cys-97 coordinates [4Fe-4S] cluster. At Arg-100 the chain carries ADP-ribosylarginine; by dinitrogenase reductase ADP-ribosyltransferase. [4Fe-4S] cluster is bound at residue Cys-133.

It belongs to the NifH/BchL/ChlL family. As to quaternary structure, homodimer. [4Fe-4S] cluster is required as a cofactor. Post-translationally, the reversible ADP-ribosylation of Arg-100 inactivates the nitrogenase reductase and regulates nitrogenase activity.

It carries out the reaction N2 + 8 reduced [2Fe-2S]-[ferredoxin] + 16 ATP + 16 H2O = H2 + 8 oxidized [2Fe-2S]-[ferredoxin] + 2 NH4(+) + 16 ADP + 16 phosphate + 6 H(+). The key enzymatic reactions in nitrogen fixation are catalyzed by the nitrogenase complex, which has 2 components: the iron protein and the molybdenum-iron protein. The protein is Nitrogenase iron protein 2 (nifH2) of Paenibacillus durus (Paenibacillus azotofixans).